The sequence spans 377 residues: F-box protein At4g00755 (377 aa).

Positions 7-47 (LDTDTSLSILSCLDDPSDIVRASAVSRSWRQFVVKYSLSKN) constitute an F-box domain.

The protein is F-box protein At4g00755 of Arabidopsis thaliana (Mouse-ear cress).